The following is a 594-amino-acid chain: CRISPR-associated DNA-binding protein Cas12m (594 aa).

The tract at residues 1-85 (MSRLEARTRY…EKVRQVMVFE (85 aa)) is recognition domain (REC1-N). The segment at 86–153 (SETTKKIKEL…ERSFIFEARK (68 aa)) is recognition domain (REC2). Positions 154 to 211 (QELAQLEKERWAVVKELGKGSGLYWCNLEDVVNSYDIGRKKAKAAGGEMRFHRWDGTG) are recognition domain (REC1-C). Residues 212 to 314 (KVTVRFQKGL…RYKLNLVLEI (103 aa)) are wedge domain (WED). Residues 315 to 329 (LGENTNRILPALEGT) form a linker region. The ruvC-I stretch occupies residues 330-540 (AAIDLGWRTV…KNHVEFTYVP (211 aa)). The target nucleic-acid binding (TNB) stretch occupies residues 541–575 (AENTTITCHKCGHKEKFDAAAQIIHTCSTCGELWD). Zn(2+)-binding residues include cysteine 548, cysteine 551, cysteine 567, and cysteine 570. The interval 576-594 (QDYNAAKNLLAFSQKGGVK) is ruvC-II. Aspartate 577 is a binding site for Mg(2+).

The protein belongs to the CRISPR-associated DNA-binding protein Cas12m family. Mg(2+) serves as cofactor. Requires Zn(2+) as cofactor.

In terms of biological role, CRISPR (clustered regularly interspaced short palindromic repeat), is an adaptive immune system that provides protection against mobile genetic elements (viruses, transposable elements and conjugative plasmids). CRISPR clusters contain sequences complementary to antecedent mobile elements and target invading nucleic acids. CRISPR clusters are transcribed and processed into CRISPR RNA (crRNA). Recognizes a short motif in the CRISPR repeat sequences (the 5' PAM or protospacer adjacent motif, 5'-C/TCN-3' in this organism) to help distinguish self versus nonself, as targets within the bacterial CRISPR locus do not have PAMs. Upon expression in E.coli as a CRISPR locus inhibits plasmid propagation when targeted to regions essential for plasmid propagation (replication origin but not a selectable marker), probably by inhibiting transcription. Cas12m-crRNA binds DNA in a PAM-dependent, crRNA-guided fashion. Upon expression in E.coli as a CRISPR region preferentially binds to its associated crRNA. Probably required for pre-crRNA processing to mature crRNA. In Thermanaerosceptrum fracticalcis, this protein is CRISPR-associated DNA-binding protein Cas12m.